Reading from the N-terminus, the 235-residue chain is Phosphoribosylaminoimidazole-succinocarboxamide synthase (235 aa).

This sequence belongs to the SAICAR synthetase family.

The catalysed reaction is 5-amino-1-(5-phospho-D-ribosyl)imidazole-4-carboxylate + L-aspartate + ATP = (2S)-2-[5-amino-1-(5-phospho-beta-D-ribosyl)imidazole-4-carboxamido]succinate + ADP + phosphate + 2 H(+). It functions in the pathway purine metabolism; IMP biosynthesis via de novo pathway; 5-amino-1-(5-phospho-D-ribosyl)imidazole-4-carboxamide from 5-amino-1-(5-phospho-D-ribosyl)imidazole-4-carboxylate: step 1/2. This Streptococcus gordonii (strain Challis / ATCC 35105 / BCRC 15272 / CH1 / DL1 / V288) protein is Phosphoribosylaminoimidazole-succinocarboxamide synthase.